Consider the following 163-residue polypeptide: Putative 6-carboxy-5,6,7,8-tetrahydropterin synthase (163 aa).

Histidine 18 lines the Zn(2+) pocket. Cysteine 26 acts as the Proton acceptor in catalysis. Histidine 30 and histidine 32 together coordinate Zn(2+). Catalysis depends on charge relay system residues histidine 70 and glutamate 148.

It belongs to the PTPS family. QueD subfamily. It depends on Zn(2+) as a cofactor.

The catalysed reaction is 7,8-dihydroneopterin 3'-triphosphate + H2O = 6-carboxy-5,6,7,8-tetrahydropterin + triphosphate + acetaldehyde + 2 H(+). The protein operates within purine metabolism; 7-cyano-7-deazaguanine biosynthesis. Its function is as follows. Catalyzes the conversion of 7,8-dihydroneopterin triphosphate (H2NTP) to 6-carboxy-5,6,7,8-tetrahydropterin (CPH4) and acetaldehyde. This is Putative 6-carboxy-5,6,7,8-tetrahydropterin synthase (queD) from Methanocaldococcus jannaschii (strain ATCC 43067 / DSM 2661 / JAL-1 / JCM 10045 / NBRC 100440) (Methanococcus jannaschii).